The following is a 189-amino-acid chain: Elongation factor P (189 aa).

This sequence belongs to the elongation factor P family.

It localises to the cytoplasm. It functions in the pathway protein biosynthesis; polypeptide chain elongation. Functionally, involved in peptide bond synthesis. Stimulates efficient translation and peptide-bond synthesis on native or reconstituted 70S ribosomes in vitro. Probably functions indirectly by altering the affinity of the ribosome for aminoacyl-tRNA, thus increasing their reactivity as acceptors for peptidyl transferase. The chain is Elongation factor P from Rhizobium etli (strain CIAT 652).